Consider the following 156-residue polypeptide: Protein L* (156 aa).

In terms of biological role, may be required for viral persistance in the host. This is Protein L* from Theiler's murine encephalomyelitis virus (strain DA) (TMEV).